The primary structure comprises 136 residues: Nanos homolog 2 (136 aa).

A disordered region spans residues 27–51 (KQRQEGEVAEEPNSRPQEKSEQDLE). Positions 28 to 48 (QRQEGEVAEEPNSRPQEKSEQ) are enriched in basic and acidic residues. Residues 60-114 (ICNFCKHNGESRHVYTSHQLKTPEGVVVCPILRHYVCPLCGATGDQAHTLKYCPL) form a Nanos-type zinc finger. Cys-61, Cys-64, His-77, Cys-88, Cys-96, Cys-99, His-107, and Cys-112 together coordinate Zn(2+). 2 consecutive short sequence motifs (C2HC) follow at residues 61 to 88 (CNFC…VVVC) and 96 to 112 (CPLC…LKYC).

It belongs to the nanos family. As to quaternary structure, interacts with CNOT1, CNOT3, CNOT6L, CNOT7 and CNOT9. As to expression, predominantly expressed in male germ cells. Expressed in self-renewing spermatogonial stem cells and developing gonads.

It localises to the cytoplasm. Its subcellular location is the P-body. The protein resides in the perinuclear region. Its function is as follows. Plays a key role in the sexual differentiation of germ cells by promoting the male fate but suppressing the female fate. Represses the female fate pathways by suppressing meiosis, which in turn results in the promotion of the male fate. Maintains the suppression of meiosis by preventing STRA8 expression, which is required for premeiotic DNA replication, after CYP26B1 is decreased. Regulates the localization of the CCR4-NOT deadenylation complex to P-bodies and plays a role in recruiting the complex to trigger the degradation of mRNAs involved in meiosis. Required for the maintenance of the spermatogonial stem cell population. Not essential for the assembly of P-bodies but is required for the maintenance of their normal state. The protein is Nanos homolog 2 (Nanos2) of Mus musculus (Mouse).